A 396-amino-acid polypeptide reads, in one-letter code: Elongation factor Tu (396 aa).

The tr-type G domain maps to 10 to 206; sequence KPHVNVGTIG…ALDTYIPTPE (197 aa). The tract at residues 19-26 is G1; the sequence is GHVDHGKT. 19-26 is a binding site for GTP; that stretch reads GHVDHGKT. Residue Thr-26 participates in Mg(2+) binding. Positions 60-64 are G2; it reads GITIN. The segment at 81 to 84 is G3; the sequence is DCPG. GTP-binding positions include 81 to 85 and 136 to 139; these read DCPGH and NKCD. The G4 stretch occupies residues 136–139; sequence NKCD. The G5 stretch occupies residues 174-176; sequence SAK.

The protein belongs to the TRAFAC class translation factor GTPase superfamily. Classic translation factor GTPase family. EF-Tu/EF-1A subfamily. In terms of assembly, monomer.

The protein resides in the cytoplasm. It catalyses the reaction GTP + H2O = GDP + phosphate + H(+). In terms of biological role, GTP hydrolase that promotes the GTP-dependent binding of aminoacyl-tRNA to the A-site of ribosomes during protein biosynthesis. The polypeptide is Elongation factor Tu (Burkholderia vietnamiensis (strain G4 / LMG 22486) (Burkholderia cepacia (strain R1808))).